We begin with the raw amino-acid sequence, 435 residues long: MSKFDLTAKNCQYLDRHLTFPLLEFLLQKNIYDQTSLLKFILETVSKTNMVDYTMDIRERLNMGNELPEELTKRRSNVLVKLKELQTEVAPLMKCMEELKNPDTMKDSKSIVHALQQEFDFKYDIIRSAQKLAKYLYECGNYRDSISYLYICLLVMEPTDKNYLNVLWGKLAAEILTLNWPTALEDLTRLRDFIDNHNFSPIEVLQQRTWLIHWSVLVFFNHAKGRDLIIEMFLYKQLYLNAIQTMCPHILRYLATAVIINRGRRNALKDLIKIIQQESYTYKDPITEFLECLYVNFDFEGARMKLHECQTVIINDFFIIGCLQEFIENARLMIFETFCRIHQCITIGMLADKLNMEPDEAECWIVNLIRNARLDAKIDSKLGHVVMGTQPLSPYQQLVEKIDSLSVRSEALTVLVERKQKAKTQESGEGNWKYY.

In terms of domain architecture, PCI spans 219 to 392 (FFNHAKGRDL…GHVVMGTQPL (174 aa)).

It belongs to the eIF-3 subunit E family. As to quaternary structure, component of the eukaryotic translation initiation factor 3 (eIF-3) complex.

Its subcellular location is the cytoplasm. Component of the eukaryotic translation initiation factor 3 (eIF-3) complex, which is involved in protein synthesis of a specialized repertoire of mRNAs and, together with other initiation factors, stimulates binding of mRNA and methionyl-tRNAi to the 40S ribosome. The eIF-3 complex specifically targets and initiates translation of a subset of mRNAs involved in cell proliferation. This Culex quinquefasciatus (Southern house mosquito) protein is Eukaryotic translation initiation factor 3 subunit E (eIF3-S6).